A 380-amino-acid polypeptide reads, in one-letter code: tRNA(Met) cytidine acetate ligase (380 aa).

Residues 7-20 (IAEY…HLYQ), glycine 101, asparagine 151, and arginine 176 each bind ATP.

It belongs to the TmcAL family.

It is found in the cytoplasm. It catalyses the reaction cytidine(34) in elongator tRNA(Met) + acetate + ATP = N(4)-acetylcytidine(34) in elongator tRNA(Met) + AMP + diphosphate. Its function is as follows. Catalyzes the formation of N(4)-acetylcytidine (ac(4)C) at the wobble position of elongator tRNA(Met), using acetate and ATP as substrates. First activates an acetate ion to form acetyladenylate (Ac-AMP) and then transfers the acetyl group to tRNA to form ac(4)C34. The sequence is that of tRNA(Met) cytidine acetate ligase from Ligilactobacillus salivarius (strain UCC118) (Lactobacillus salivarius).